A 130-amino-acid polypeptide reads, in one-letter code: Fumarate reductase subunit D (130 aa).

Helical transmembrane passes span 35–55, 67–87, and 110–130; these read FAMI…LGVI, SFAT…LPMW, and IACY…IFMI.

The protein belongs to the FrdD family. In terms of assembly, part of an enzyme complex containing four subunits: a flavoprotein (FrdA), an iron-sulfur protein (FrdB), and two hydrophobic anchor proteins (FrdC and FrdD).

The protein resides in the cell inner membrane. Its function is as follows. Anchors the catalytic components of the fumarate reductase complex to the cell membrane, binds quinones. This Vibrio cholerae serotype O1 (strain M66-2) protein is Fumarate reductase subunit D.